Here is a 93-residue protein sequence, read N- to C-terminus: Large ribosomal subunit protein uL23cz/uL23cy (93 aa).

Belongs to the universal ribosomal protein uL23 family. In terms of assembly, part of the 50S ribosomal subunit.

It localises to the plastid. The protein localises to the chloroplast. Functionally, binds to 23S rRNA. The protein is Large ribosomal subunit protein uL23cz/uL23cy (rpl23-A) of Oryza nivara (Indian wild rice).